The following is a 487-amino-acid chain: Proline--tRNA ligase (487 aa).

It belongs to the class-II aminoacyl-tRNA synthetase family. ProS type 3 subfamily. Homodimer.

It is found in the cytoplasm. It carries out the reaction tRNA(Pro) + L-proline + ATP = L-prolyl-tRNA(Pro) + AMP + diphosphate. In terms of biological role, catalyzes the attachment of proline to tRNA(Pro) in a two-step reaction: proline is first activated by ATP to form Pro-AMP and then transferred to the acceptor end of tRNA(Pro). The chain is Proline--tRNA ligase from Pyrobaculum neutrophilum (strain DSM 2338 / JCM 9278 / NBRC 100436 / V24Sta) (Thermoproteus neutrophilus).